A 234-amino-acid polypeptide reads, in one-letter code: 2,3-bisphosphoglycerate-dependent phosphoglycerate mutase (234 aa).

Substrate contacts are provided by residues 8-15 (RHGESVWN), 21-22 (TG), Arg60, 87-90 (ERHY), Lys98, 114-115 (RR), and 183-184 (GN). His9 (tele-phosphohistidine intermediate) is an active-site residue. The active-site Proton donor/acceptor is the Glu87.

Belongs to the phosphoglycerate mutase family. BPG-dependent PGAM subfamily. As to quaternary structure, homodimer.

It carries out the reaction (2R)-2-phosphoglycerate = (2R)-3-phosphoglycerate. Its pathway is carbohydrate degradation; glycolysis; pyruvate from D-glyceraldehyde 3-phosphate: step 3/5. In terms of biological role, catalyzes the interconversion of 2-phosphoglycerate and 3-phosphoglycerate. In Citrifermentans bemidjiense (strain ATCC BAA-1014 / DSM 16622 / JCM 12645 / Bem) (Geobacter bemidjiensis), this protein is 2,3-bisphosphoglycerate-dependent phosphoglycerate mutase.